The following is a 179-amino-acid chain: ATP synthase subunit delta (179 aa).

It belongs to the ATPase delta chain family. In terms of assembly, F-type ATPases have 2 components, F(1) - the catalytic core - and F(0) - the membrane proton channel. F(1) has five subunits: alpha(3), beta(3), gamma(1), delta(1), epsilon(1). F(0) has three main subunits: a(1), b(2) and c(10-14). The alpha and beta chains form an alternating ring which encloses part of the gamma chain. F(1) is attached to F(0) by a central stalk formed by the gamma and epsilon chains, while a peripheral stalk is formed by the delta and b chains.

Its subcellular location is the cell inner membrane. Functionally, f(1)F(0) ATP synthase produces ATP from ADP in the presence of a proton or sodium gradient. F-type ATPases consist of two structural domains, F(1) containing the extramembraneous catalytic core and F(0) containing the membrane proton channel, linked together by a central stalk and a peripheral stalk. During catalysis, ATP synthesis in the catalytic domain of F(1) is coupled via a rotary mechanism of the central stalk subunits to proton translocation. Its function is as follows. This protein is part of the stalk that links CF(0) to CF(1). It either transmits conformational changes from CF(0) to CF(1) or is implicated in proton conduction. The sequence is that of ATP synthase subunit delta from Burkholderia ambifaria (strain ATCC BAA-244 / DSM 16087 / CCUG 44356 / LMG 19182 / AMMD) (Burkholderia cepacia (strain AMMD)).